We begin with the raw amino-acid sequence, 224 residues long: UPF0758 protein LCA_0852 (224 aa).

Residues 100–222 (VVASSQMVGQ…YLSLREEGYL (123 aa)) form the MPN domain. 3 residues coordinate Zn(2+): H171, H173, and D184. The short motif at 171 to 184 (HNHPSGQLAPSTQD) is the JAMM motif element.

This sequence belongs to the UPF0758 family.

The polypeptide is UPF0758 protein LCA_0852 (Latilactobacillus sakei subsp. sakei (strain 23K) (Lactobacillus sakei subsp. sakei)).